The following is a 160-amino-acid chain: Protein max (160 aa).

A compositionally biased stretch (acidic residues) spans 1 to 13 (MSDNDDIEVESDE). Residues 1–40 (MSDNDDIEVESDEEQPRFQSAADKRAHHNALERKRRDHIK) are disordered. S2 bears the N-acetylserine mark. Phosphoserine is present on residues S2 and S11. The bHLH domain maps to 23-74 (DKRAHHNALERKRRDHIKDSFHSLRDSVPSLQGEKASRAQILDKATEYIQYM). Positions 29 to 40 (NALERKRRDHIK) are enriched in basic and acidic residues. K66 bears the N6-acetyllysine mark. The tract at residues 81–102 (HQQDIDDLKRQNALLEQQVRAL) is leucine-zipper. Residues 105–160 (ARSSAQLQTNYPSSDNSLYTNAKGGTISAFDGGSDSSSESEPEEPQNRKKLRMEAS) are disordered. Phosphoserine is present on S107. A compositionally biased stretch (polar residues) spans 107-124 (SSAQLQTNYPSSDNSLYT). 2 positions are modified to N6-acetyllysine: K153 and K154.

The protein belongs to the MAX family. In terms of assembly, efficient DNA binding requires dimerization with another bHLH protein. Binds DNA as a heterodimer with MYC or MAD. Part of the E2F6.com-1 complex in G0 phase composed of E2F6, MGA, MAX, TFDP1, CBX3, BAT8, EUHMTASE1, RING1, RNF2, MBLR, L3MBTL2 and YAF2. Component of some MLL1/MLL complex, at least composed of the core components KMT2A/MLL1, ASH2L, HCFC1/HCF1, WDR5 and RBBP5, as well as the facultative components BACC1, CHD8, E2F6, HSP70, INO80C, KANSL1, LAS1L, MAX, MCRS1, MGA, MYST1/MOF, PELP1, PHF20, PRP31, RING2, RUVB1/TIP49A, RUVB2/TIP49B, SENP3, TAF1, TAF4, TAF6, TAF7, TAF9 and TEX10. Interacts with SPAG9. The heterodimer MYC:MAX interacts with ABI1; the interaction may enhance MYC:MAX transcriptional activity. In terms of processing, phosphorylated.

The protein resides in the nucleus. It localises to the cell projection. Its subcellular location is the dendrite. Its function is as follows. Transcription regulator. Forms a sequence-specific DNA-binding protein complex with MYC or MAD which recognizes the core sequence 5'-CAC[GA]TG-3'. The MYC:MAX complex is a transcriptional activator, whereas the MAD:MAX complex is a repressor. May repress transcription via the recruitment of a chromatin remodeling complex containing H3 'Lys-9' histone methyltransferase activity. Represses MYC transcriptional activity from E-box elements. The chain is Protein max from Rattus norvegicus (Rat).